Here is a 769-residue protein sequence, read N- to C-terminus: MASCPKAIWSWRFQRVVFRSVQLLCFSILIFELMTQKEVSAWTYHYSDKPYSWNYSRAFCQKYYTDLVAIQNKNEIAYLNETIPYYNSYYWIGIRKIDNKWTWVGTKKTLTEEAENWADNEPNNKKNNQDCVEIYIKSPSAPGKWNDEPCGKRKRALCYRASCQDMSCSKQGECIETIGNYTCSCYPGFYGPECEYVRECGEFDLPQNVHMNCSHPLGNFSFKSQCSFHCAEGYALNGPRELECLASGIWTNSPPQCVAVQCPALKSPEQGSMSCFHSAKAFQHQSSCSFSCEEGFTLVGPEVVHCTALGVWTAPTPVCKAIACESLESPVHGSMDCSPSPRAFQYNTSCSFRCAEGFTLRGADTVRCADSGEWTAPAPVCQALQCQDLPTSNKARVNCSHPFGDFRYQSTCSFTCDEGSFLVGASVLQCLDTGNWDAPFPECQAVTCAPLPNPQNGEKTCVQPLGGSSYKSTCWFTCHEGFSLSGPERLDCTPSGHWTGSPPTCEASKCPELSAPEQGSLDCPDTHGEFIVGSICHFSCNEGLKLEGSNHVECTASGRWTAPPPSCKVDTVSAPAPGLRCPSLIAPNQGTMSCQHHLRNFGLNTTCHFGCKAGFTLMGESALQCRPSRQWTAVAPTCRAVKCSKLPVTEPIVMNCSNPWGNFSYGSTCSFHCPEGQLLNGSERTACQENGQWSTTMPTCQAGPLTIQEALTYIGGAAAGTTGLVTSSILLALLRRRRRQKDDGKSPLNPQSHLGTYGVFTNAAFDPSP.

The signal sequence occupies residues 1–32 (MASCPKAIWSWRFQRVVFRSVQLLCFSILIFE). Topologically, residues 33 to 717 (LMTQKEVSAW…QEALTYIGGA (685 aa)) are extracellular. N-linked (GlcNAc...) asparagine glycosylation is found at Asn-54 and Asn-80. A C-type lectin domain is found at 58-158 (AFCQKYYTDL…PCGKRKRALC (101 aa)). 21 disulfides stabilise this stretch: Cys-60–Cys-158, Cys-131–Cys-150, Cys-163–Cys-174, Cys-168–Cys-183, Cys-185–Cys-194, Cys-200–Cys-244, Cys-230–Cys-257, Cys-262–Cys-306, Cys-292–Cys-319, Cys-324–Cys-368, Cys-354–Cys-381, Cys-386–Cys-430, Cys-416–Cys-443, Cys-448–Cys-492, Cys-478–Cys-505, Cys-510–Cys-554, Cys-540–Cys-567, Cys-581–Cys-625, Cys-611–Cys-638, Cys-643–Cys-687, and Cys-673–Cys-700. Glu-121, Asn-123, and Asn-124 together coordinate Ca(2+). Asn-123 contacts a carbohydrate. Residues Glu-133 and Asn-146 each contribute to the a carbohydrate site. Ca(2+) is bound by residues Asn-146 and Asp-147. One can recognise an EGF-like domain in the interval 159-195 (YRASCQDMSCSKQGECIETIGNYTCSCYPGFYGPECE). N-linked (GlcNAc...) asparagine glycosylation is present at Asn-180. Sushi domains follow at residues 198–259 (RECG…QCVA), 260–321 (VQCP…VCKA), 322–383 (IACE…VCQA), 384–445 (LQCQ…ECQA), 446–507 (VTCA…TCEA), 508–569 (SKCP…SCKV), 579–640 (LRCP…TCRA), and 641–702 (VKCS…TCQA). N-linked (GlcNAc...) asparagine glycosylation is found at Asn-212 and Asn-219. Residue Asn-347 is glycosylated (N-linked (GlcNAc...) asparagine). Asn-398 is a glycosylation site (N-linked (GlcNAc...) asparagine). Asn-604 is a glycosylation site (N-linked (GlcNAc...) asparagine). 3 N-linked (GlcNAc...) asparagine glycosylation sites follow: Asn-655, Asn-662, and Asn-680. A helical membrane pass occupies residues 718-734 (AAGTTGLVTSSILLALL). The Cytoplasmic segment spans residues 735–769 (RRRRRQKDDGKSPLNPQSHLGTYGVFTNAAFDPSP). The disordered stretch occupies residues 740–769 (QKDDGKSPLNPQSHLGTYGVFTNAAFDPSP). The Endocytosis signal motif lies at 757 to 760 (YGVF). Positions 760 to 769 (FTNAAFDPSP) are interaction with SNX17.

Belongs to the selectin/LECAM family. In terms of assembly, interacts with SNX17. Interacts with SELPLG/PSGL1 and PODXL2 and mediates neutrophil adhesion and leukocyte rolling. This interaction requires the sialyl-Lewis X epitope of SELPLG and PODXL2, and specific tyrosine sulfation on SELPLG. Interacts (via C-type lectin domain) with alpha-IIb/beta3 integrin ITGA2B:ITGB3 and alpha-V/beta-3 integrin ITGAV:ITGB3. Interacts with alpha5/beta1 integrin ITGA5:ITGB1 and alpha4/beta1 integrin ITGA4:ITGB.

Its subcellular location is the cell membrane. Ca(2+)-dependent receptor for myeloid cells that binds to carbohydrates on neutrophils and monocytes. Mediates the interaction of activated endothelial cells or platelets with leukocytes. The ligand recognized is sialyl-Lewis X. Mediates rapid rolling of leukocyte rolling over vascular surfaces during the initial steps in inflammation through interaction with SELPLG. Mediates cell-cell interactions and cell adhesion via the interaction with integrin alpha-IIb/beta3 (ITGA2B:ITGB3) and integrin alpha-V/beta-3 (ITGAV:ITGB3). In Ovis aries (Sheep), this protein is P-selectin (SELP).